The primary structure comprises 390 residues: GTPase Obg (390 aa).

An Obg domain is found at 1 to 159 (MKFIDEALIR…RDLQLELMLL (159 aa)). Residues 160 to 333 (ADVGMLGLPN…LCRDIMDFIE (174 aa)) form the OBG-type G domain. Residues 166–173 (GLPNAGKS), 191–195 (FTTLV), 213–216 (DIPG), 283–286 (NKID), and 314–316 (SAV) contribute to the GTP site. Mg(2+)-binding residues include Ser-173 and Thr-193. The disordered stretch occupies residues 363–390 (DHQFEDEDEDWDDWSEEDEEGVETIYKP). Residues 366–384 (FEDEDEDWDDWSEEDEEGV) show a composition bias toward acidic residues.

Belongs to the TRAFAC class OBG-HflX-like GTPase superfamily. OBG GTPase family. As to quaternary structure, monomer. The cofactor is Mg(2+).

The protein localises to the cytoplasm. In terms of biological role, an essential GTPase which binds GTP, GDP and possibly (p)ppGpp with moderate affinity, with high nucleotide exchange rates and a fairly low GTP hydrolysis rate. Plays a role in control of the cell cycle, stress response, ribosome biogenesis and in those bacteria that undergo differentiation, in morphogenesis control. The sequence is that of GTPase Obg from Pasteurella multocida (strain Pm70).